The following is a 242-amino-acid chain: tRNA (guanine-N(1)-)-methyltransferase (242 aa).

Residues G114 and 134–139 (IGDFVL) contribute to the S-adenosyl-L-methionine site. Residues 223–233 (RRDLLPEHSKN) are compositionally biased toward basic and acidic residues. Positions 223–242 (RRDLLPEHSKNNPEQTNKLS) are disordered.

Belongs to the RNA methyltransferase TrmD family. Homodimer.

It is found in the cytoplasm. The enzyme catalyses guanosine(37) in tRNA + S-adenosyl-L-methionine = N(1)-methylguanosine(37) in tRNA + S-adenosyl-L-homocysteine + H(+). In terms of biological role, specifically methylates guanosine-37 in various tRNAs. The polypeptide is tRNA (guanine-N(1)-)-methyltransferase (Rhodopirellula baltica (strain DSM 10527 / NCIMB 13988 / SH1)).